A 276-amino-acid chain; its full sequence is Ribosomal RNA small subunit methyltransferase A (276 aa).

S-adenosyl-L-methionine-binding residues include N27, L29, G54, E75, D101, and N123.

The protein belongs to the class I-like SAM-binding methyltransferase superfamily. rRNA adenine N(6)-methyltransferase family. RsmA subfamily.

The protein localises to the cytoplasm. The catalysed reaction is adenosine(1518)/adenosine(1519) in 16S rRNA + 4 S-adenosyl-L-methionine = N(6)-dimethyladenosine(1518)/N(6)-dimethyladenosine(1519) in 16S rRNA + 4 S-adenosyl-L-homocysteine + 4 H(+). Functionally, specifically dimethylates two adjacent adenosines (A1518 and A1519) in the loop of a conserved hairpin near the 3'-end of 16S rRNA in the 30S particle. May play a critical role in biogenesis of 30S subunits. This chain is Ribosomal RNA small subunit methyltransferase A, found in Bartonella quintana (strain Toulouse) (Rochalimaea quintana).